A 127-amino-acid polypeptide reads, in one-letter code: uncharacterized protein (127 aa).

Residues 91–113 traverse the membrane as a helical segment; sequence IYLIVSIAVSILAIIAFFIFLML.

The protein localises to the membrane. This is an uncharacterized protein from Bacillus subtilis (strain 168).